We begin with the raw amino-acid sequence, 454 residues long: tRNA modification GTPase MnmE (454 aa).

3 residues coordinate (6S)-5-formyl-5,6,7,8-tetrahydrofolate: R23, E80, and K120. A TrmE-type G domain is found at 216–377 (GMKVVIAGRP…LRNHLKQSMG (162 aa)). N226 serves as a coordination point for K(+). GTP contacts are provided by residues 226–231 (NAGKSS), 245–251 (TDIAGTT), 270–273 (DTAG), and 335–338 (NKAD). A Mg(2+)-binding site is contributed by S230. Residues T245, I247, and T250 each contribute to the K(+) site. T251 serves as a coordination point for Mg(2+). Residue K454 participates in (6S)-5-formyl-5,6,7,8-tetrahydrofolate binding.

This sequence belongs to the TRAFAC class TrmE-Era-EngA-EngB-Septin-like GTPase superfamily. TrmE GTPase family. In terms of assembly, homodimer. Heterotetramer of two MnmE and two MnmG subunits. Requires K(+) as cofactor.

It is found in the cytoplasm. Its function is as follows. Exhibits a very high intrinsic GTPase hydrolysis rate. Involved in the addition of a carboxymethylaminomethyl (cmnm) group at the wobble position (U34) of certain tRNAs, forming tRNA-cmnm(5)s(2)U34. The polypeptide is tRNA modification GTPase MnmE (Escherichia coli O157:H7).